Reading from the N-terminus, the 1616-residue chain is Vitellogenin-1 (1616 aa).

Residues 1 to 19 form the signal peptide; that stretch reads MRSIIIASIVALAIAFSPA. Positions 24–689 constitute a Vitellogenin domain; sequence FEPKIDYHYK…EKNSFLLKDL (666 aa). Asn-1270 carries N-linked (GlcNAc...) asparagine glycosylation. A VWFD domain is found at 1310 to 1479; the sequence is SVCKVQKNQI…SYLLKNEECE (170 aa). Intrachain disulfides connect Cys-1312/Cys-1442 and Cys-1334/Cys-1478. A compositionally biased stretch (acidic residues) spans 1505 to 1514; it reads SFEETYDYEQ. The tract at residues 1505–1531 is disordered; that stretch reads SFEETYDYEQENTNKKQKNQRSQKKSD.

In terms of tissue distribution, expressed in the intestine of adult hermaphrodites.

The protein localises to the secreted. In terms of biological role, precursor of the egg-yolk proteins that are sources of nutrients during embryonic development. Together with other vitellogenins, may play a role in modulating life-span, acting via induction of autophagy and lysosomal lipolysis. This is Vitellogenin-1 (vit-1) from Caenorhabditis elegans.